The primary structure comprises 1358 residues: Phosphoinositide 3-kinase regulatory subunit 4 (1358 aa).

G2 carries the N-myristoyl glycine lipid modification. One can recognise a Protein kinase domain in the interval 26–324 (FEYDKSLGST…AFPEVFYTFL (299 aa)). ATP contacts are provided by residues 32–40 (LGSTRFFKV) and K53. The active-site Proton acceptor is D148. 4 HEAT repeats span residues 413 to 450 (ILLD…LVQE), 458 to 495 (IYPE…TALR), 572 to 610 (KAND…YVGW), and 612 to 648 (SSSI…LGLL). S808, S813, S853, and S865 each carry phosphoserine. The tract at residues 875–899 (LPKTSDHEVVPTGKSPRSESSAGVC) is disordered. WD repeat units follow at residues 991–1030 (EHKS…GKTT), 1040–1079 (RIGG…LPKS), 1093–1134 (KEDG…NAWT), 1139–1178 (LKSG…PISS), 1182–1223 (PSRA…RRLT), and 1237–1278 (PSPH…RSYV). The interval 1307 to 1326 (KQKVGPSDDTPRRGPESLPV) is disordered. Residues 1315 to 1326 (DTPRRGPESLPV) are compositionally biased toward basic and acidic residues. T1316 carries the phosphothreonine modification. Residues 1327 to 1358 (GHHDIITDIATFQTTQGFIVTASRDGIVKVWK) form a WD 7 repeat.

Belongs to the protein kinase superfamily. Ser/Thr protein kinase family. Component of the PI3K (PI3KC3/PI3K-III/class III phosphatidylinositol 3-kinase) complex the core of which is composed of the catalytic subunit PIK3C3, the regulatory subunit PIK3R4 and BECN1 associating with additional regulatory/auxiliary subunits to form alternative complex forms. Alternative complex forms containing a fourth regulatory subunit in a mutually exclusive manner are PI3K complex I (PI3KC3-C1) containing ATG14, and PI3K complex II (PI3KC3-C2) containing UVRAG. PI3KC3-C1 displays a V-shaped architecture with PIK3R4 serving as a bridge between PIK3C3 and the ATG14:BECN1 subcomplex. Both, PI3KC3-C1 and PI3KC3-C2, can associate with further regulatory subunits, such as RUBCN, SH3GLB1/Bif-1, AMBRA1 and NRBF2. PI3KC3-C1 probably associates with PIK3CB. Interacts with RAB7A in the presence of PIK3C3/VPS34. Interacts with NRBF2. Interacts with ARMC3. Requires Mn(2+) as cofactor. In terms of processing, myristoylated. Probably autophosphorylated.

It localises to the late endosome. The protein resides in the cytoplasmic vesicle. The protein localises to the autophagosome. Its subcellular location is the membrane. The catalysed reaction is L-seryl-[protein] + ATP = O-phospho-L-seryl-[protein] + ADP + H(+). The enzyme catalyses L-threonyl-[protein] + ATP = O-phospho-L-threonyl-[protein] + ADP + H(+). Functionally, regulatory subunit of the PI3K complex that mediates formation of phosphatidylinositol 3-phosphate; different complex forms are believed to play a role in multiple membrane trafficking pathways: PI3KC3-C1 is involved in initiation of autophagosomes and PI3KC3-C2 in maturation of autophagosomes and endocytosis. Involved in regulation of degradative endocytic trafficking and cytokinesis, probably in the context of PI3KC3-C2. The chain is Phosphoinositide 3-kinase regulatory subunit 4 (Pik3r4) from Rattus norvegicus (Rat).